We begin with the raw amino-acid sequence, 78 residues long: Small ribosomal subunit protein bS18 (78 aa).

The protein belongs to the bacterial ribosomal protein bS18 family. In terms of assembly, part of the 30S ribosomal subunit. Forms a tight heterodimer with protein bS6.

In terms of biological role, binds as a heterodimer with protein bS6 to the central domain of the 16S rRNA, where it helps stabilize the platform of the 30S subunit. The chain is Small ribosomal subunit protein bS18 from Rhodospirillum rubrum (strain ATCC 11170 / ATH 1.1.1 / DSM 467 / LMG 4362 / NCIMB 8255 / S1).